Consider the following 372-residue polypeptide: Glutamate 5-kinase (372 aa).

K14 is an ATP binding site. Residues S54, D141, and N153 each coordinate substrate. 173 to 174 (TD) serves as a coordination point for ATP. The PUA domain maps to 280-358 (RGTLVLDDGA…ESIVRELGYM (79 aa)).

Belongs to the glutamate 5-kinase family.

The protein resides in the cytoplasm. It carries out the reaction L-glutamate + ATP = L-glutamyl 5-phosphate + ADP. Its pathway is amino-acid biosynthesis; L-proline biosynthesis; L-glutamate 5-semialdehyde from L-glutamate: step 1/2. Its function is as follows. Catalyzes the transfer of a phosphate group to glutamate to form L-glutamate 5-phosphate. This Pseudomonas syringae pv. syringae (strain B728a) protein is Glutamate 5-kinase.